We begin with the raw amino-acid sequence, 354 residues long: Caffeic acid 3-O-methyltransferase (354 aa).

Position 121–127 (121–127 (MNQDKVL)) interacts with substrate. The segment at 153–171 (AFEYHGKDQRFNKVFNSGM) is substrate binding. Gly-199, Asp-222, Asp-242, Met-243, and Lys-256 together coordinate S-adenosyl-L-methionine. His-260 acts as the Proton acceptor in catalysis.

This sequence belongs to the class I-like SAM-binding methyltransferase superfamily. Cation-independent O-methyltransferase family. COMT subfamily. As to quaternary structure, homodimer.

It carries out the reaction (E)-caffeate + S-adenosyl-L-methionine = (E)-ferulate + S-adenosyl-L-homocysteine + H(+). The protein operates within aromatic compound metabolism; phenylpropanoid biosynthesis. Functionally, catalyzes the conversion of caffeic acid to ferulic acid and of 5-hydroxyferulic acid to sinapic acid. The resulting products may subsequently be converted to the corresponding alcohols that are incorporated into lignins. This is Caffeic acid 3-O-methyltransferase from Zinnia elegans (Garden zinnia).